Reading from the N-terminus, the 491-residue chain is UDP-N-acetylmuramoyl-L-alanyl-D-glutamate--2,6-diaminopimelate ligase (491 aa).

Ser30 contacts UDP-N-acetyl-alpha-D-muramoyl-L-alanyl-D-glutamate. 108–114 lines the ATP pocket; sequence GTNGKTT. Residues Asn149, 150 to 151, Ser177, Gln183, and Arg185 each bind UDP-N-acetyl-alpha-D-muramoyl-L-alanyl-D-glutamate; that span reads TT. The residue at position 217 (Lys217) is an N6-carboxylysine. Residues Arg383, 407 to 410, Gly458, and Glu462 each bind meso-2,6-diaminopimelate; that span reads DNPR. The Meso-diaminopimelate recognition motif motif lies at 407-410; the sequence is DNPR.

Belongs to the MurCDEF family. MurE subfamily. The cofactor is Mg(2+). Carboxylation is probably crucial for Mg(2+) binding and, consequently, for the gamma-phosphate positioning of ATP.

It is found in the cytoplasm. The enzyme catalyses UDP-N-acetyl-alpha-D-muramoyl-L-alanyl-D-glutamate + meso-2,6-diaminopimelate + ATP = UDP-N-acetyl-alpha-D-muramoyl-L-alanyl-gamma-D-glutamyl-meso-2,6-diaminopimelate + ADP + phosphate + H(+). Its pathway is cell wall biogenesis; peptidoglycan biosynthesis. Catalyzes the addition of meso-diaminopimelic acid to the nucleotide precursor UDP-N-acetylmuramoyl-L-alanyl-D-glutamate (UMAG) in the biosynthesis of bacterial cell-wall peptidoglycan. The chain is UDP-N-acetylmuramoyl-L-alanyl-D-glutamate--2,6-diaminopimelate ligase from Listeria monocytogenes serotype 4b (strain F2365).